Consider the following 987-residue polypeptide: UPF0182 protein Lxx09300 (987 aa).

7 consecutive transmembrane segments (helical) span residues 17–37, 59–79, 108–128, 167–187, 206–226, 256–276, and 283–303; these read VWTT…FAGL, AAIA…WVVI, RLAM…SAAS, VGFA…TCYL, VQIS…VWLD, AVLA…AFTG, and VGTA…PWAI. Disordered stretches follow at residues 700–719 and 886–947; these read RDDA…DPTL and TAGD…ALQQ. Over residues 705–719 the composition is skewed to low complexity; that stretch reads TTPNDPTSSPTDPTL. Positions 897-932 are enriched in gly residues; that stretch reads GGSGGGSSGDAGSSAGGGSSGGGGSSAGGSSSGSGS. The span at 933–947 shows a compositional bias: low complexity; the sequence is SGTQSNAALQRALQQ.

The protein belongs to the UPF0182 family.

It is found in the cell membrane. This is UPF0182 protein Lxx09300 from Leifsonia xyli subsp. xyli (strain CTCB07).